Consider the following 405-residue polypeptide: Arginine biosynthesis bifunctional protein ArgJ (405 aa).

Positions 152, 178, 189, 276, 400, and 405 each coordinate substrate. Thr189 serves as the catalytic Nucleophile.

Belongs to the ArgJ family. As to quaternary structure, heterotetramer of two alpha and two beta chains.

The protein resides in the cytoplasm. It carries out the reaction N(2)-acetyl-L-ornithine + L-glutamate = N-acetyl-L-glutamate + L-ornithine. The enzyme catalyses L-glutamate + acetyl-CoA = N-acetyl-L-glutamate + CoA + H(+). It participates in amino-acid biosynthesis; L-arginine biosynthesis; L-ornithine and N-acetyl-L-glutamate from L-glutamate and N(2)-acetyl-L-ornithine (cyclic): step 1/1. Its pathway is amino-acid biosynthesis; L-arginine biosynthesis; N(2)-acetyl-L-ornithine from L-glutamate: step 1/4. Its function is as follows. Catalyzes two activities which are involved in the cyclic version of arginine biosynthesis: the synthesis of N-acetylglutamate from glutamate and acetyl-CoA as the acetyl donor, and of ornithine by transacetylation between N(2)-acetylornithine and glutamate. The chain is Arginine biosynthesis bifunctional protein ArgJ from Pseudomonas syringae pv. tomato (strain ATCC BAA-871 / DC3000).